A 115-amino-acid polypeptide reads, in one-letter code: Macrophage migration inhibitory factor homolog (115 aa).

Catalysis depends on P2, which acts as the Proton acceptor; via imino nitrogen. Residues K33 and I65 each coordinate substrate.

It belongs to the MIF family.

It localises to the secreted. It catalyses the reaction L-dopachrome = 5,6-dihydroxyindole-2-carboxylate. The enzyme catalyses 3-phenylpyruvate = enol-phenylpyruvate. Its function is as follows. Tautomerization of the methyl ester of L-dopachrome. Inhibits migration of human peripheral blood mononuclear cells. This is Macrophage migration inhibitory factor homolog from Brugia malayi (Filarial nematode worm).